Consider the following 96-residue polypeptide: Aspartyl/glutamyl-tRNA(Asn/Gln) amidotransferase subunit C (96 aa).

The protein belongs to the GatC family. As to quaternary structure, heterotrimer of A, B and C subunits.

The enzyme catalyses L-glutamyl-tRNA(Gln) + L-glutamine + ATP + H2O = L-glutaminyl-tRNA(Gln) + L-glutamate + ADP + phosphate + H(+). The catalysed reaction is L-aspartyl-tRNA(Asn) + L-glutamine + ATP + H2O = L-asparaginyl-tRNA(Asn) + L-glutamate + ADP + phosphate + 2 H(+). Allows the formation of correctly charged Asn-tRNA(Asn) or Gln-tRNA(Gln) through the transamidation of misacylated Asp-tRNA(Asn) or Glu-tRNA(Gln) in organisms which lack either or both of asparaginyl-tRNA or glutaminyl-tRNA synthetases. The reaction takes place in the presence of glutamine and ATP through an activated phospho-Asp-tRNA(Asn) or phospho-Glu-tRNA(Gln). The protein is Aspartyl/glutamyl-tRNA(Asn/Gln) amidotransferase subunit C of Leptospira borgpetersenii serovar Hardjo-bovis (strain JB197).